Consider the following 469-residue polypeptide: UDP-N-acetylmuramate--L-alanine ligase (469 aa).

119 to 125 (GTHGKTT) contacts ATP.

Belongs to the MurCDEF family.

It localises to the cytoplasm. It catalyses the reaction UDP-N-acetyl-alpha-D-muramate + L-alanine + ATP = UDP-N-acetyl-alpha-D-muramoyl-L-alanine + ADP + phosphate + H(+). It participates in cell wall biogenesis; peptidoglycan biosynthesis. Its function is as follows. Cell wall formation. The sequence is that of UDP-N-acetylmuramate--L-alanine ligase from Vesicomyosocius okutanii subsp. Calyptogena okutanii (strain HA).